The sequence spans 346 residues: Holliday junction branch migration complex subunit RuvB (346 aa).

Residues 1–181 form a large ATPase domain (RuvB-L) region; that stretch reads MSDRNPLIDA…FGIPVRLNFY (181 aa). ATP contacts are provided by residues Leu20, Arg21, Gly62, Lys65, Thr66, Thr67, 128–130, Arg171, Tyr181, and Arg218; that span reads EDF. Thr66 is a Mg(2+) binding site. The tract at residues 182-252 is small ATPAse domain (RuvB-S); that stretch reads TVEELEYIVR…IADEALSRLE (71 aa). The segment at 255–346 is head domain (RuvB-H); it reads NRGLDQLDRR…SQYGLFMEDE (92 aa). Arg291, Arg310, and Arg315 together coordinate DNA.

This sequence belongs to the RuvB family. In terms of assembly, homohexamer. Forms an RuvA(8)-RuvB(12)-Holliday junction (HJ) complex. HJ DNA is sandwiched between 2 RuvA tetramers; dsDNA enters through RuvA and exits via RuvB. An RuvB hexamer assembles on each DNA strand where it exits the tetramer. Each RuvB hexamer is contacted by two RuvA subunits (via domain III) on 2 adjacent RuvB subunits; this complex drives branch migration. In the full resolvosome a probable DNA-RuvA(4)-RuvB(12)-RuvC(2) complex forms which resolves the HJ.

It is found in the cytoplasm. It catalyses the reaction ATP + H2O = ADP + phosphate + H(+). Its function is as follows. The RuvA-RuvB-RuvC complex processes Holliday junction (HJ) DNA during genetic recombination and DNA repair, while the RuvA-RuvB complex plays an important role in the rescue of blocked DNA replication forks via replication fork reversal (RFR). RuvA specifically binds to HJ cruciform DNA, conferring on it an open structure. The RuvB hexamer acts as an ATP-dependent pump, pulling dsDNA into and through the RuvAB complex. RuvB forms 2 homohexamers on either side of HJ DNA bound by 1 or 2 RuvA tetramers; 4 subunits per hexamer contact DNA at a time. Coordinated motions by a converter formed by DNA-disengaged RuvB subunits stimulates ATP hydrolysis and nucleotide exchange. Immobilization of the converter enables RuvB to convert the ATP-contained energy into a lever motion, pulling 2 nucleotides of DNA out of the RuvA tetramer per ATP hydrolyzed, thus driving DNA branch migration. The RuvB motors rotate together with the DNA substrate, which together with the progressing nucleotide cycle form the mechanistic basis for DNA recombination by continuous HJ branch migration. Branch migration allows RuvC to scan DNA until it finds its consensus sequence, where it cleaves and resolves cruciform DNA. This is Holliday junction branch migration complex subunit RuvB from Brucella melitensis biotype 2 (strain ATCC 23457).